We begin with the raw amino-acid sequence, 374 residues long: Lipid-A-disaccharide synthase (374 aa).

Belongs to the LpxB family.

The enzyme catalyses a lipid X + a UDP-2-N,3-O-bis[(3R)-3-hydroxyacyl]-alpha-D-glucosamine = a lipid A disaccharide + UDP + H(+). It functions in the pathway bacterial outer membrane biogenesis; LPS lipid A biosynthesis. Functionally, condensation of UDP-2,3-diacylglucosamine and 2,3-diacylglucosamine-1-phosphate to form lipid A disaccharide, a precursor of lipid A, a phosphorylated glycolipid that anchors the lipopolysaccharide to the outer membrane of the cell. This Pseudomonas fluorescens (strain ATCC BAA-477 / NRRL B-23932 / Pf-5) protein is Lipid-A-disaccharide synthase.